Consider the following 138-residue polypeptide: MRHGKAHRKLGRTSAHRTAMFANMSASLIKHEQIVTTLPKAKELRPFVEKLVTLAKRGDLHARRQAISHVRDVEQVGKLFAVLGPRYKDRNGGYIRVLKAGYRHGDNAPMAVIEFVDRDPAEKGKDSGPVAEAAFAEA.

The protein belongs to the bacterial ribosomal protein bL17 family. Part of the 50S ribosomal subunit. Contacts protein L32.

This Phenylobacterium zucineum (strain HLK1) protein is Large ribosomal subunit protein bL17.